Reading from the N-terminus, the 246-residue chain is V-type proton ATPase subunit D (246 aa).

The protein belongs to the V-ATPase D subunit family. As to quaternary structure, V-ATPase is a heteromultimeric enzyme made up of two complexes: the ATP-hydrolytic V1 complex and the proton translocation V0 complex. The V1 complex consists of three catalytic AB heterodimers that form a heterohexamer, three peripheral stalks each consisting of EG heterodimers, one central rotor including subunits D and F, and the regulatory subunits C and H. The proton translocation complex V0 consists of the proton transport subunit a, a ring of proteolipid subunits c9c'', rotary subunit d, subunits e and f, and the accessory subunits VhaAC45 and ATP6AP2.

Its function is as follows. Subunit of the V1 complex of vacuolar(H+)-ATPase (V-ATPase), a multisubunit enzyme composed of a peripheral complex (V1) that hydrolyzes ATP and a membrane integral complex (V0) that translocates protons. V-ATPase is responsible for acidifying and maintaining the pH of intracellular compartments and in some cell types, is targeted to the plasma membrane, where it is responsible for acidifying the extracellular environment. This chain is V-type proton ATPase subunit D, found in Manduca sexta (Tobacco hawkmoth).